The primary structure comprises 1536 residues: MQVSKYFTHQLSQFSGYPSIVSERDACGVGFIANLNSKPSNKIVTEALNALSCMEHRGGCGADNISGDGAGVTIQIPWDIFISEGINFLPKLQSNQSILNYGVRMILRSSDDLDKIKKIFSWALDEYQLDLISWRNVPVDKSILGEESKFNQPLVVQCIVRSNNLIDYKLDKHLYLVRKKIEKLVSKLDINTNKQFYICSFSSKTIVYKGMLRSEFLVKYYNDLSNSLYVSNFAMYHRRFSTNTMPKWSLAQPMRFMAHNGEINTLLGNLNWNKSKESLLKSSIWSDYYDILSPITNLENSDSANLDSVLELFIHSGRTPQEALMILIPEAYKNQPALSLFPEITDFYEYYSILQEPWDGPALVVFTDGKFVGATLDRNGLRPARYTITDDGFISLSSETGVSNINSQNVVTKGRLGPGQMLCVDLSKNLVLDNWMIKQQISQKFPYKEWVNKYQSNLNLLEYLNDFTFDKVQMNRWHTAFGYTNEDVELVIEHMASSAKEPTFSMGDDTPLPILSEKPHLIYDYFKQRFAQVTNPAIDPLRESLVMSLITYLGPKGNILEPTAIMAKSIKLESPIINENELAQLNSFNLSVVTVPTFIDKHLSTQTFVDKILEICSQCDSYISQGIEILVLSDRIEILPVDKIFVSPLLIVGAVHHYLIKKQLRHKVSLVIDTGQCWTTHHFALLIGYGASAICPYLAFLTVRQWWHNSRTQKLMSTGKLSRLTIQESQDNYRSAIEKGLLKILSKMGISLLSSYHGAQIFEILGLGQDVVDLAFSGTVSRLNGMTLNELYEDSLKSYNLAFITEIPKKLPNLGYVQYRPSAEYHVNNPEMSKTLHKAVRNNDNILYSKYKSLLNDRRPTNLRDLLELKTDRQPISIDQVEDVNSVLMRFCTGGMSLGALSRETHETLAIRMNRIGGKSNSGEGGEDSTRFKSIQDLDTSGVSRTFSHLKGLKINDLASSAIKQIASGRFGVTPEYLVNAKQLEIKIAQGAKPGEGGQLPGKKVSPYIAELRNCKPGVTLISPPPHHDIYSIEDLAQLIFDLHQINPDAQVSVKLVASLGIGTIAAGVAKGNADIIQISGHDGGTGASPLSSIKHAGAPWDVGLAEVHTTLVENSLREKVILRVDGGLRTGKDIIIAALMGAEEFGFGTVAMIATGCVMARVCHTNNCPVGVATQRQDLRNRFPGIPSDVVNFFIFVAEEVREILAELGYKSLEELIGLNDLFKVKDIELSKTKNLNLNILFNSINMNRNLIPKLKHKTVHTNGNVLDDILLSKSNIINAINLQSNIVQDIEILNTDRCVGARISGLITKMYGRDNFNGNLQLNFVGSAGQSFGAFISKGIHLYLKGEANDYVGKGMNGGEIIICPPIEQKTSSSNQVILGNTCLYGATGGYLFANGQAGERFAVRNSNGYSVVEGVGDHACEYMTGGLIVVLGTFGRNIGAGMTGGIAYFLDEDNTLKNKLNTEIVKAQRLLTKESEEQLKNIMELYEIKTKSEKAKLILDNWSQYLAKFYQIVPPSEQIQHLLMLIFFFSKYC.

Cys27 serves as the catalytic For GATase activity. The Glutamine amidotransferase type-2 domain occupies Cys27–Ser427. Position 1105–1162 (Leu1105–Arg1162) interacts with FMN. Cys1158, Cys1164, and Cys1169 together coordinate [3Fe-4S] cluster.

This sequence belongs to the glutamate synthase family. Monomer. The cofactor is [3Fe-4S] cluster. FAD is required as a cofactor. FMN serves as cofactor.

It is found in the plastid. The protein resides in the chloroplast stroma. The catalysed reaction is 2 oxidized [2Fe-2S]-[ferredoxin] + 2 L-glutamate = L-glutamine + 2 reduced [2Fe-2S]-[ferredoxin] + 2-oxoglutarate + 2 H(+). It functions in the pathway amino-acid biosynthesis; L-glutamate biosynthesis via GLT pathway; L-glutamate from 2-oxoglutarate and L-glutamine (ferredoxin route): step 1/1. It participates in energy metabolism; nitrogen metabolism. The chain is Ferredoxin-dependent glutamate synthase (gltB) from Antithamnion sp. (Red alga).